The following is a 177-amino-acid chain: ATP synthase subunit b (177 aa).

The chain crosses the membrane as a helical span at residues 16 to 36 (HLLLANMIVTIVVFLLLLILL).

This sequence belongs to the ATPase B chain family. F-type ATPases have 2 components, F(1) - the catalytic core - and F(0) - the membrane proton channel. F(1) has five subunits: alpha(3), beta(3), gamma(1), delta(1), epsilon(1). F(0) has three main subunits: a(1), b(2) and c(10-14). The alpha and beta chains form an alternating ring which encloses part of the gamma chain. F(1) is attached to F(0) by a central stalk formed by the gamma and epsilon chains, while a peripheral stalk is formed by the delta and b chains.

The protein resides in the cell membrane. In terms of biological role, f(1)F(0) ATP synthase produces ATP from ADP in the presence of a proton or sodium gradient. F-type ATPases consist of two structural domains, F(1) containing the extramembraneous catalytic core and F(0) containing the membrane proton channel, linked together by a central stalk and a peripheral stalk. During catalysis, ATP synthesis in the catalytic domain of F(1) is coupled via a rotary mechanism of the central stalk subunits to proton translocation. Component of the F(0) channel, it forms part of the peripheral stalk, linking F(1) to F(0). This is ATP synthase subunit b from Exiguobacterium sibiricum (strain DSM 17290 / CCUG 55495 / CIP 109462 / JCM 13490 / 255-15).